We begin with the raw amino-acid sequence, 292 residues long: Ferric aerobactin-binding protein VatD (292 aa).

A signal peptide spans 1–12 (MLSAALAFNSYA). The Fe/B12 periplasmic-binding domain maps to 30–292 (KVVALDWVLT…HITGRLTQPQ (263 aa)). Residues Trp-61, Arg-77, Tyr-118, Arg-185, Trp-213, Phe-215, Trp-269, and Phe-271 each coordinate desferrioxamine B.

This sequence belongs to the bacterial solute-binding protein 8 family. In terms of assembly, the complex is composed of two ATP-binding proteins (VatC), two transmembrane proteins (VatB) and a solute-binding protein (VatD).

The protein localises to the periplasm. In terms of biological role, part of the ABC transporter complex VatCDB involved in the import of iron(3+)-complexed aerobactin, a citrate-hydroxamate siderophore produced by other bacteria. Binds the iron(3+)-aerobactin complex and transfers it to the membrane-bound permease. Functions in the import of iron(3+)-complexed vulnibactin, a catecholate siderophore synthesized by V.vulnificus, in the absence of FatB. The polypeptide is Ferric aerobactin-binding protein VatD (Vibrio vulnificus).